A 53-amino-acid polypeptide reads, in one-letter code: Minor histocompatibility protein HMSD variant form (53 aa).

In terms of assembly, ACC-6 forms a complex with MHC HLA-B*4403. As to expression, highly expressed in dendritic cells and primary leukemia cells, especially those of myeloid lineage. ACC-6 expression is limited to cells of the hematopoietic lineage.

This splice variant of HMSD is the precursor of the histocompatibility antigen ACC-6. More generally, minor histocompatibility antigens (mHags) refer to immunogenic peptide which, when complexed with MHC, can generate an immune response after recognition by specific T-cells. The peptides are derived from polymorphic intracellular proteins, which are cleaved by normal pathways of antigen processing. The binding of these peptides to MHC class I or class II molecules and its expression on the cell surface can stimulate T-cell responses and thereby trigger graft rejection or graft-versus-host disease (GVHD) after hematopoietic stem cell transplantation from HLA-identical sibling donor. GVHD is a frequent complication after bone marrow transplantation (BMT), due to mismatch of minor histocompatibility antigen in HLA-matched sibling marrow transplants. However, associated with GVHD, a favorable graft-versus-leukemia (GVL) can be induced by donor-recipient disparities in mHags. ACC-6 is presented to the cell surface by MHC HLA-B*4403. This complex specifically elicits donor-cytotoxic T-lymphocyte (CTL) reactivity against hematologic malignancies after treatment by HLA-identical allogenic BMT. It induces cell recognition and lysis by CTL. Immunogenicity of most autosomal mHags results from single-nucleotide polymorphisms that cause amino-acid substitutions within epitopes, leading to the differential recognition of peptides between donor and recipient. The chain is Minor histocompatibility protein HMSD variant form (HMSD) from Homo sapiens (Human).